Reading from the N-terminus, the 299-residue chain is MTKIKIVVIVGPTAVGKTALGISLAKAFNGEIISGDSQQVYRQLDIGTAKATQEEQEAAVHHLIDIREVTESYSAYDFVQDAQKAISDIVSRGKLPIIVGGTGLYLQSLLEGYHLGGQVDQEAVKAYRNELEQLDDHDLYERLQVNNITIEQVNRRRAIRALELAQFADELENAETAYEPLIIGLNDDRQVIYDRINQRVNRMLENGLLEEAKWLYEHYPTVQASRGIGYKELFPYFVGEMTLAEASDQLKQNTRRFAKRQLTWFRNRMAVSFTAITAPDYPQVVHDRVRDFLGQKEKS.

An ATP-binding site is contributed by 11–18; the sequence is GPTAVGKT. Position 13–18 (13–18) interacts with substrate; it reads TAVGKT. Residues 36-39 are interaction with substrate tRNA; it reads DSQQ.

The protein belongs to the IPP transferase family. In terms of assembly, monomer. Mg(2+) is required as a cofactor.

The enzyme catalyses adenosine(37) in tRNA + dimethylallyl diphosphate = N(6)-dimethylallyladenosine(37) in tRNA + diphosphate. Functionally, catalyzes the transfer of a dimethylallyl group onto the adenine at position 37 in tRNAs that read codons beginning with uridine, leading to the formation of N6-(dimethylallyl)adenosine (i(6)A). This is tRNA dimethylallyltransferase from Streptococcus pyogenes serotype M12 (strain MGAS2096).